A 197-amino-acid polypeptide reads, in one-letter code: MDMQSRIRRLFQASIDTKQQAMDILAPHIEQASLVMVNALLNEGKMLACGNGGSAGDAQHFSSELLNRFERERPSLPAIALTTDSSTLTSIANDYSYNEVFSKQIRALGQPGDVLLAISTSGNSANVIQAIQAAHDREMIVVALTGRDGGGMASLLLPEDVEIRVPSTVTARIQEVHLLAIHCLCDLIDSQLFGSEE.

Positions 36–197 constitute an SIS domain; sequence MVNALLNEGK…IDSQLFGSEE (162 aa). Position 51–53 (51–53) interacts with substrate; the sequence is NGG. Zn(2+) is bound by residues histidine 60 and glutamate 64. Substrate-binding positions include glutamate 64, 93–94, 119–121, serine 124, and glutamine 174; these read ND and STS. Residues glutamine 174 and histidine 182 each coordinate Zn(2+).

Belongs to the SIS family. GmhA subfamily. As to quaternary structure, homotetramer. Zn(2+) serves as cofactor.

It localises to the cytoplasm. The catalysed reaction is 2 D-sedoheptulose 7-phosphate = D-glycero-alpha-D-manno-heptose 7-phosphate + D-glycero-beta-D-manno-heptose 7-phosphate. The protein operates within carbohydrate biosynthesis; D-glycero-D-manno-heptose 7-phosphate biosynthesis; D-glycero-alpha-D-manno-heptose 7-phosphate and D-glycero-beta-D-manno-heptose 7-phosphate from sedoheptulose 7-phosphate: step 1/1. In terms of biological role, catalyzes the isomerization of sedoheptulose 7-phosphate in D-glycero-D-manno-heptose 7-phosphate. The chain is Phosphoheptose isomerase from Pseudomonas putida (strain GB-1).